We begin with the raw amino-acid sequence, 120 residues long: Ribosome-binding factor A (120 aa).

Belongs to the RbfA family. As to quaternary structure, monomer. Binds 30S ribosomal subunits, but not 50S ribosomal subunits or 70S ribosomes.

The protein localises to the cytoplasm. One of several proteins that assist in the late maturation steps of the functional core of the 30S ribosomal subunit. Associates with free 30S ribosomal subunits (but not with 30S subunits that are part of 70S ribosomes or polysomes). Required for efficient processing of 16S rRNA. May interact with the 5'-terminal helix region of 16S rRNA. This chain is Ribosome-binding factor A, found in Buchnera aphidicola subsp. Acyrthosiphon pisum (strain 5A).